A 343-amino-acid polypeptide reads, in one-letter code: S-adenosylmethionine:tRNA ribosyltransferase-isomerase (343 aa).

It belongs to the QueA family. In terms of assembly, monomer.

It localises to the cytoplasm. The enzyme catalyses 7-aminomethyl-7-carbaguanosine(34) in tRNA + S-adenosyl-L-methionine = epoxyqueuosine(34) in tRNA + adenine + L-methionine + 2 H(+). Its pathway is tRNA modification; tRNA-queuosine biosynthesis. Functionally, transfers and isomerizes the ribose moiety from AdoMet to the 7-aminomethyl group of 7-deazaguanine (preQ1-tRNA) to give epoxyqueuosine (oQ-tRNA). The polypeptide is S-adenosylmethionine:tRNA ribosyltransferase-isomerase (Enterococcus faecalis (strain ATCC 700802 / V583)).